Reading from the N-terminus, the 373-residue chain is Dual-specificity RNA methyltransferase RlmN (373 aa).

Glu101 acts as the Proton acceptor in catalysis. The region spanning 107 to 350 (ENKRTTLCVS…TIIRKIRGAD (244 aa)) is the Radical SAM core domain. Cys114 and Cys355 are joined by a disulfide. The [4Fe-4S] cluster site is built by Cys121, Cys125, and Cys128. Residues 179 to 180 (GE), Ser211, 233 to 235 (SLH), and Asn312 contribute to the S-adenosyl-L-methionine site. Cys355 acts as the S-methylcysteine intermediate in catalysis.

Belongs to the radical SAM superfamily. RlmN family. The cofactor is [4Fe-4S] cluster.

It localises to the cytoplasm. The catalysed reaction is adenosine(2503) in 23S rRNA + 2 reduced [2Fe-2S]-[ferredoxin] + 2 S-adenosyl-L-methionine = 2-methyladenosine(2503) in 23S rRNA + 5'-deoxyadenosine + L-methionine + 2 oxidized [2Fe-2S]-[ferredoxin] + S-adenosyl-L-homocysteine. It carries out the reaction adenosine(37) in tRNA + 2 reduced [2Fe-2S]-[ferredoxin] + 2 S-adenosyl-L-methionine = 2-methyladenosine(37) in tRNA + 5'-deoxyadenosine + L-methionine + 2 oxidized [2Fe-2S]-[ferredoxin] + S-adenosyl-L-homocysteine. In terms of biological role, specifically methylates position 2 of adenine 2503 in 23S rRNA and position 2 of adenine 37 in tRNAs. m2A2503 modification seems to play a crucial role in the proofreading step occurring at the peptidyl transferase center and thus would serve to optimize ribosomal fidelity. The protein is Dual-specificity RNA methyltransferase RlmN of Blochmanniella pennsylvanica (strain BPEN).